The primary structure comprises 312 residues: Acetylglutamate kinase (312 aa).

Residues 69 to 70 (GG), Arg91, and Asn191 contribute to the substrate site.

The protein belongs to the acetylglutamate kinase family. ArgB subfamily.

It is found in the cytoplasm. The catalysed reaction is N-acetyl-L-glutamate + ATP = N-acetyl-L-glutamyl 5-phosphate + ADP. It participates in amino-acid biosynthesis; L-arginine biosynthesis; N(2)-acetyl-L-ornithine from L-glutamate: step 2/4. Catalyzes the ATP-dependent phosphorylation of N-acetyl-L-glutamate. The sequence is that of Acetylglutamate kinase from Streptomyces griseus subsp. griseus (strain JCM 4626 / CBS 651.72 / NBRC 13350 / KCC S-0626 / ISP 5235).